The primary structure comprises 640 residues: Biosynthetic arginine decarboxylase (640 aa).

Lysine 105 is subject to N6-(pyridoxal phosphate)lysine. 290–300 (FDVGGGLAIDY) provides a ligand contact to substrate.

Belongs to the Orn/Lys/Arg decarboxylase class-II family. SpeA subfamily. It depends on Mg(2+) as a cofactor. Requires pyridoxal 5'-phosphate as cofactor.

It carries out the reaction L-arginine + H(+) = agmatine + CO2. Its function is as follows. Catalyzes the biosynthesis of agmatine from arginine. This is Biosynthetic arginine decarboxylase from Vibrio vulnificus (strain CMCP6).